We begin with the raw amino-acid sequence, 75 residues long: Protein Tlp homolog (75 aa).

The protein belongs to the Tlp family.

The polypeptide is Protein Tlp homolog (Clostridium acetobutylicum (strain ATCC 824 / DSM 792 / JCM 1419 / IAM 19013 / LMG 5710 / NBRC 13948 / NRRL B-527 / VKM B-1787 / 2291 / W)).